The chain runs to 228 residues: Aldehyde dehydrogenase 9 (228 aa).

Residue G76–A81 participates in NAD(+) binding. Catalysis depends on residues E99 and C132.

It belongs to the aldehyde dehydrogenase family.

It catalyses the reaction an aldehyde + NAD(+) + H2O = a carboxylate + NADH + 2 H(+). Its pathway is alcohol metabolism; ethanol degradation; acetate from ethanol: step 2/2. The sequence is that of Aldehyde dehydrogenase 9 (ALDH9) from Polyandrocarpa misakiensis (Tunicate).